Here is an 86-residue protein sequence, read N- to C-terminus: Beta-toxin To4 (86 aa).

The signal sequence occupies residues 1-20 (MTRFVLFISCFFLIGMIVEC). Positions 21–83 (KDGYLMEYGG…IWNRATNKCG (63 aa)) constitute an LCN-type CS-alpha/beta domain. 4 cysteine pairs are disulfide-bonded: cysteine 31/cysteine 82, cysteine 35/cysteine 57, cysteine 43/cysteine 63, and cysteine 47/cysteine 65. Cysteine 82 carries the post-translational modification Cysteine amide.

The protein belongs to the long (4 C-C) scorpion toxin superfamily. Sodium channel inhibitor family. Beta subfamily. As to expression, expressed by the venom gland.

Its subcellular location is the secreted. In terms of biological role, beta toxins bind voltage-independently at site-4 of sodium channels (Nav) and shift the voltage of activation toward more negative potentials thereby affecting sodium channel activation and promoting spontaneous and repetitive firing. This toxin shows moderate inhibition of Nav1.1/SCN1A, Nav1.2/SCN2A, and Nav1.4/SCN4A, and promotes a left voltage shift on these channels. It exhibits similar potency on Nav1.2/SCN2A and Nav1.4/SCN4A (40-50% peak current inhibition at 0.5 uM), and weaker inhibition on Nav1.2 (20-30% peak current inhibition at 0.5 uM). The protein is Beta-toxin To4 of Tityus obscurus (Amazonian scorpion).